The sequence spans 38 residues: Large ribosomal subunit protein bL36 (38 aa).

It belongs to the bacterial ribosomal protein bL36 family.

The chain is Large ribosomal subunit protein bL36 from Methylacidiphilum infernorum (isolate V4) (Methylokorus infernorum (strain V4)).